The sequence spans 382 residues: Sphingosine 1-phosphate receptor 1 (382 aa).

Val-2 carries the post-translational modification N-acetylvaline. Topologically, residues 2–46 (VSTSIPEVKALRSSVSDYGNYDIIVRHYNYTGKLNIGAEKDHGIK) are extracellular. Lys-10 bears the N6-acetyllysine mark. N-linked (GlcNAc...) asparagine glycosylation is present at Asn-30. Residues 47 to 68 (LTSVVFILICCFIILENIFVLL) form a helical membrane-spanning segment. The Cytoplasmic segment spans residues 69 to 82 (TIWKTKKFHRPMYY). The chain crosses the membrane as a helical span at residues 83-104 (FIGNLALSDLLAGVAYTANLLL). Over 105–116 (SGATTYKLTPAQ) the chain is Extracellular. The chain crosses the membrane as a helical span at residues 117–138 (WFLREGSMFVALSASVFSLLAI). Residue 120-121 (RE) coordinates sphing-4-enine 1-phosphate. At 139–160 (AIERYITMLKMKLHNGSNSSRS) the chain is on the cytoplasmic side. A helical transmembrane segment spans residues 161-182 (FLLISACWVISLILGGLPIMGW). At 183–196 (NCISSLSSCSTVLP) the chain is on the extracellular side. A disulfide bridge connects residues Cys-184 and Cys-191. Residues 197–224 (LYHKHYILFCTTVFTLLLLSIVILYCRI) traverse the membrane as a helical segment. Residues 225-257 (YSLVRTRSRRLTFRKNISKASRSSEKSLALLKT) lie on the Cytoplasmic side of the membrane. Phosphothreonine is present on Thr-236. The helical transmembrane segment at 258-278 (VIIVLSVFIACWAPLFILLLL) threads the bilayer. Residue 265-269 (FIACW) coordinates sphing-4-enine 1-phosphate. Residues 279–289 (DVGCKAKTCDI) are Extracellular-facing. An intrachain disulfide couples Cys-282 to Cys-287. Residues 290-310 (LYKAEYFLVLAVLNSGTNPII) form a helical membrane-spanning segment. At 311–382 (YTLTNKEMRR…MSSGNVNSSS (72 aa)) the chain is on the cytoplasmic side. Cys-328 is lipidated: S-palmitoyl cysteine. The disordered stretch occupies residues 348-382 (MEFSRSKSDNSSHPQKDDGDNPETIMSSGNVNSSS). Phosphoserine is present on residues Ser-351 and Ser-353. The segment covering 351 to 366 (SRSKSDNSSHPQKDDG) has biased composition (basic and acidic residues). Positions 371-382 (TIMSSGNVNSSS) are enriched in polar residues.

The protein belongs to the G-protein coupled receptor 1 family. As to quaternary structure, interacts with GNAI1 and GNAI3. Interacts with CD69; this interaction promotes S1PR1 degradation. Palmitoylated by ZDHHC5. Palmitoylation is required for targeting to plasma membrane, enabling G(i) coupling. In terms of tissue distribution, expressed in a wide variety of tissues with highest levels in brain, heart and spleen. Lower levels found in kidney, liver, lung, muscle, placenta, thymus, and uterus. Very low levels in intestine, stomach and testis. According to PubMed:9931453, expressed modestly in apparent endothelial cells surrounding some blood vessels (e.g. aortic trunk).

Its subcellular location is the cell membrane. It localises to the endosome. It is found in the membrane raft. In terms of biological role, G-protein coupled receptor for the bioactive lysosphingolipid sphingosine 1-phosphate (S1P) that seems to be coupled to the G(i) subclass of heteromeric G proteins. Signaling leads to the activation of RAC1, SRC, PTK2/FAK1 and MAP kinases. Plays an important role in cell migration, probably via its role in the reorganization of the actin cytoskeleton and the formation of lamellipodia in response to stimuli that increase the activity of the sphingosine kinase SPHK1. Required for normal chemotaxis toward sphingosine 1-phosphate. Required for normal embryonic heart development and normal cardiac morphogenesis. Plays an important role in the regulation of sprouting angiogenesis and vascular maturation. Inhibits sprouting angiogenesis to prevent excessive sprouting during blood vessel development. Required for normal egress of mature T-cells from the thymus into the blood stream and into peripheral lymphoid organs. Plays a role in the migration of osteoclast precursor cells, the regulation of bone mineralization and bone homeostasis. Plays a role in responses to oxidized 1-palmitoyl-2-arachidonoyl-sn-glycero-3-phosphocholine by pulmonary endothelial cells and in the protection against ventilator-induced lung injury. The polypeptide is Sphingosine 1-phosphate receptor 1 (Mus musculus (Mouse)).